Consider the following 535-residue polypeptide: 5,6-dihydroxyindole-2-carboxylic acid oxidase (535 aa).

Positions 1-23 are cleaved as a signal peptide; it reads MQLPMLLLVSLPLLLNMFKPAEA. The Lumenal, melanosome segment spans residues 24–478; that stretch reads QFPRQCATIE…GPLRVTEMIT (455 aa). 5 disulfides stabilise this stretch: cysteine 29–cysteine 40, cysteine 41–cysteine 64, cysteine 55–cysteine 98, cysteine 100–cysteine 109, and cysteine 112–cysteine 121. N-linked (GlcNAc...) asparagine glycosylation is found at asparagine 95 and asparagine 103. Asparagine 180 carries an N-linked (GlcNAc...) asparagine glycan. Zn(2+)-binding residues include histidine 191, histidine 214, and histidine 223. 2 disulfide bridges follow: cysteine 257–cysteine 260 and cysteine 289–cysteine 302. Asparagine 303 and asparagine 349 each carry an N-linked (GlcNAc...) asparagine glycan. 2 residues coordinate Zn(2+): histidine 376 and histidine 380. A glycan (N-linked (GlcNAc...) asparagine) is linked at asparagine 384. Residue histidine 403 participates in Zn(2+) binding. Residues 479-499 form a helical membrane-spanning segment; that stretch reads IAIVTALVLVAIIFAAAACIV. Residues 500 to 535 are Cytoplasmic-facing; the sequence is RAKKNRDELHQPLLTDQYQHYSDDYDGIATPSQSVV.

Belongs to the tyrosinase family. As to quaternary structure, tyrosinase, TYRP1 and TYRP2 may form a multienzyme complex. Requires Cu(2+) as cofactor. Zn(2+) serves as cofactor.

The protein resides in the melanosome membrane. The catalysed reaction is 2 5,6-dihydroxyindole-2-carboxylate + O2 = 2 indole-5,6-quinone-2-carboxylate + 2 H2O. It participates in pigment biosynthesis; melanin biosynthesis. Functionally, plays a role in melanin biosynthesis. Catalyzes the oxidation of 5,6-dihydroxyindole-2-carboxylic acid (DHICA) into indole-5,6-quinone-2-carboxylic acid. May regulate or influence the type of melanin synthesized. Also to a lower extent, capable of hydroxylating tyrosine and producing melanin. This Gallus gallus (Chicken) protein is 5,6-dihydroxyindole-2-carboxylic acid oxidase (TYRP1).